A 198-amino-acid polypeptide reads, in one-letter code: Dual specificity protein phosphatase 1 (198 aa).

The tract at residues methionine 1 to glycine 20 is disordered. Positions serine 8–serine 17 are enriched in low complexity. A caM binding domain 1 region spans residues glutamate 26–aspartate 47. The 142-residue stretch at valine 50 to valine 191 folds into the Tyrosine-protein phosphatase domain. Catalysis depends on cysteine 135, which acts as the Phosphocysteine intermediate. Positions methionine 151 to arginine 180 are caM binding domain 2.

The protein belongs to the protein-tyrosine phosphatase family. Non-receptor class dual specificity subfamily. In terms of assembly, interacts with calmodulin (CaM) in a calcium Ca(2+)-dependent manner. As to expression, expressed in roots, stems, leaves and flowers.

The protein localises to the nucleus. It is found in the cytoplasm. It catalyses the reaction O-phospho-L-tyrosyl-[protein] + H2O = L-tyrosyl-[protein] + phosphate. It carries out the reaction O-phospho-L-seryl-[protein] + H2O = L-seryl-[protein] + phosphate. The catalysed reaction is O-phospho-L-threonyl-[protein] + H2O = L-threonyl-[protein] + phosphate. With respect to regulation, inhibited by sodium vanadate and sodium tungstate. NaF and spermifine repress specifically phosphoserine and phosphothreonine phosphatase activity. Its function is as follows. Has a dual specificity toward Ser/Thr and Tyr-containing proteins. Dephosphorylates MPK4 in vitro. The chain is Dual specificity protein phosphatase 1 (DSPTP1) from Arabidopsis thaliana (Mouse-ear cress).